A 176-amino-acid polypeptide reads, in one-letter code: Photosystem I assembly protein Ycf4 (176 aa).

2 helical membrane-spanning segments follow: residues 22–42 and 57–77; these read FLWAFILFFGSLEFILVGTAS and VMTFYGISGLFISLYLLSMLF.

Belongs to the Ycf4 family.

It is found in the plastid thylakoid membrane. Functionally, seems to be required for the assembly of the photosystem I complex. In Cuscuta obtusiflora (Peruvian dodder), this protein is Photosystem I assembly protein Ycf4.